The following is a 139-amino-acid chain: uncharacterized protein (139 aa).

Residues 77-97 (YCFFFFLVLFLNGIIATRGKA) form a helical membrane-spanning segment.

The protein resides in the mitochondrion membrane. This is an uncharacterized protein from Arabidopsis thaliana (Mouse-ear cress).